Here is a 511-residue protein sequence, read N- to C-terminus: 2,3-bisphosphoglycerate-independent phosphoglycerate mutase (511 aa).

Asp12 serves as a coordination point for Mn(2+). At Tyr36 the chain carries Phosphotyrosine. Ser62 serves as a coordination point for Mn(2+). Ser62 (phosphoserine intermediate) is an active-site residue. Residues His123, Arg153 to Asp154, Arg185, Arg191, Arg261 to Arg264, and Lys336 contribute to the substrate site. Positions 403, 407, 444, 445, and 462 each coordinate Mn(2+).

Belongs to the BPG-independent phosphoglycerate mutase family. In terms of assembly, monomer. The cofactor is Mn(2+).

The enzyme catalyses (2R)-2-phosphoglycerate = (2R)-3-phosphoglycerate. It functions in the pathway carbohydrate degradation; glycolysis; pyruvate from D-glyceraldehyde 3-phosphate: step 3/5. Its function is as follows. Catalyzes the interconversion of 2-phosphoglycerate and 3-phosphoglycerate. The chain is 2,3-bisphosphoglycerate-independent phosphoglycerate mutase from Geobacillus kaustophilus (strain HTA426).